We begin with the raw amino-acid sequence, 314 residues long: DNA-directed RNA polymerase subunit alpha (314 aa).

Residues 1-228 (MIEIEKPRIE…EHLNIFVGLT (228 aa)) form an alpha N-terminal domain (alpha-NTD) region. The tract at residues 245–314 (KEKVLEMSIE…DLGLGLRKED (70 aa)) is alpha C-terminal domain (alpha-CTD).

This sequence belongs to the RNA polymerase alpha chain family. As to quaternary structure, homodimer. The RNAP catalytic core consists of 2 alpha, 1 beta, 1 beta' and 1 omega subunit. When a sigma factor is associated with the core the holoenzyme is formed, which can initiate transcription.

It carries out the reaction RNA(n) + a ribonucleoside 5'-triphosphate = RNA(n+1) + diphosphate. Its function is as follows. DNA-dependent RNA polymerase catalyzes the transcription of DNA into RNA using the four ribonucleoside triphosphates as substrates. The chain is DNA-directed RNA polymerase subunit alpha from Staphylococcus saprophyticus subsp. saprophyticus (strain ATCC 15305 / DSM 20229 / NCIMB 8711 / NCTC 7292 / S-41).